A 317-amino-acid polypeptide reads, in one-letter code: Taste receptor type 2 member 14 (317 aa).

At 1-7 the chain is on the extracellular side; the sequence is MGGVIKS. The helical transmembrane segment at 8–28 threads the bilayer; the sequence is IFTFVLIVEFIIGNLGNSFIA. Over 29–55 the chain is Cytoplasmic; sequence LVNCIDWVKGRKISSVDRILTALAISR. A helical transmembrane segment spans residues 56-76; it reads ISLVWLIFGSWCVSVFFPALF. The Extracellular portion of the chain corresponds to 77–87; sequence ATEKMFRMLTN. 2 residues coordinate cholesterol: Thr86 and Trp89. The chain crosses the membrane as a helical span at residues 88–108; it reads IWTVINHFSVWLATGLGTFYF. Over 109-129 the chain is Cytoplasmic; the sequence is LKIANFSNSIFLYLKWRVKKV. Residues 130–150 form a helical membrane-spanning segment; sequence VLVLLLVTSVFLFLNIALINI. The Extracellular segment spans residues 151–184; sequence HINASINGYRRNKTCSSDSSNFTRFSSLIVLTST. Residues Asn153, Asn162, and Asn171 are each glycosylated (N-linked (GlcNAc...) asparagine). Residue Val180 participates in cholesterol binding. The helical transmembrane segment at 185 to 205 threads the bilayer; the sequence is VFIFIPFTLSLAMFLLLIFSM. The Cytoplasmic segment spans residues 206-232; it reads WKHRKKMQHTVKISGDASTKAHRGVKS. The helical transmembrane segment at 233 to 253 threads the bilayer; sequence VITFFLLYAIFSLSFFISVWT. The Extracellular portion of the chain corresponds to 254–261; sequence SERLEENL. The helical transmembrane segment at 262 to 282 threads the bilayer; that stretch reads IILSQVMGMAYPSCHSCVLIL. Cholesterol-binding residues include Ser265 and Met268. The Cytoplasmic segment spans residues 283–317; that stretch reads GNKKLRQASLSVLLWLRYMFKDGEPSGHKEFRESS.

Belongs to the G-protein coupled receptor T2R family. In terms of assembly, core component of the TAS2R14-GNAI1 complex, consisting of TAS2R14, GNAI1, GNB1 and GNG2; within the complex interacts with GNAI1. Core component of the TAS2R14-GNAT3 complex, consisting of TAS2R14, GNAT3, GNB1 and GNG2; within the complex interacts with GNAT3. Core component of the TAS2R14-GNAS2 complex, consisting of TAS2R14, GNAS2, GNB1 and GNG2; within the complex interacts with GNAS2. Highly expressed in cerebellum, pancreas, small intestine and thymus; also expressed in adipose, aorta, skin and tongue, but at significantly lower levels. Expressed in subsets of taste receptor cells of the tongue and palate epithelium and exclusively in gustducin-positive cells. Expressed in testis.

The protein resides in the membrane. It catalyses the reaction Ca(2+)(in) = Ca(2+)(out). It carries out the reaction 3',5'-cyclic AMP(in) = 3',5'-cyclic AMP(out). With respect to regulation, basal activity is enhanced by binding to bitter tastants, such as flufenamic acid and aristolochic acid. Regulated by cholesterol in a concentration-dependent manner. In terms of biological role, gustducin-linked G-protein coupled receptor that plays a role in the perception of bitterness. The activity of this receptor stimulates GNAT3, activating the gustducin G-protein pathway. Likely plays a role in sensing the chemical composition of the gastrointestinal content and other extra-oral tissues via the inhibitory G-protein pathways. This Homo sapiens (Human) protein is Taste receptor type 2 member 14 (TAS2R14).